Consider the following 421-residue polypeptide: Acyl-coenzyme A thioesterase 6 (421 aa).

Residues S232, D326, and H360 each act as charge relay system in the active site. A Peroxisome targeting signal motif is present at residues 419 to 421 (SKI).

It belongs to the C/M/P thioester hydrolase family.

The protein resides in the peroxisome. The protein localises to the cytoplasm. It catalyses the reaction pristanoyl-CoA + H2O = 2,6,10,14-tetramethylpentadecanoate + CoA + H(+). The enzyme catalyses phytanoyl-CoA + H2O = 3,7,11,15-tetramethylhexadecanoate + CoA + H(+). The protein operates within lipid metabolism; fatty acid metabolism. Functionally, catalyzes the hydrolysis of acyl-CoAs into free fatty acids and coenzyme A (CoASH), regulating their respective intracellular levels. Catalyzes the hydrolysis of phytanoyl-CoA and pristanoyl-CoA, two methyl-branched fatty acids derived from phytol, that enter the body via the diet. The polypeptide is Acyl-coenzyme A thioesterase 6 (Homo sapiens (Human)).